A 347-amino-acid chain; its full sequence is DNA-directed RNA polymerase subunit alpha (347 aa).

Residues 1–243 (MLIKQGERLI…DQISVFINFD (243 aa)) are alpha N-terminal domain (alpha-NTD). The tract at residues 260 to 347 (VNEHLFKSID…EWKRKQQNEA (88 aa)) is alpha C-terminal domain (alpha-CTD).

Belongs to the RNA polymerase alpha chain family. As to quaternary structure, homodimer. The RNAP catalytic core consists of 2 alpha, 1 beta, 1 beta' and 1 omega subunit. When a sigma factor is associated with the core the holoenzyme is formed, which can initiate transcription.

It catalyses the reaction RNA(n) + a ribonucleoside 5'-triphosphate = RNA(n+1) + diphosphate. DNA-dependent RNA polymerase catalyzes the transcription of DNA into RNA using the four ribonucleoside triphosphates as substrates. This Desulfovibrio desulfuricans (strain ATCC 27774 / DSM 6949 / MB) protein is DNA-directed RNA polymerase subunit alpha.